Consider the following 165-residue polypeptide: Nucleotide-binding protein P9301_05061 (165 aa).

It belongs to the YajQ family.

Functionally, nucleotide-binding protein. This is Nucleotide-binding protein P9301_05061 from Prochlorococcus marinus (strain MIT 9301).